The primary structure comprises 139 residues: UPF0216 protein MJ1224 (139 aa).

Belongs to the UPF0216 family.

In Methanocaldococcus jannaschii (strain ATCC 43067 / DSM 2661 / JAL-1 / JCM 10045 / NBRC 100440) (Methanococcus jannaschii), this protein is UPF0216 protein MJ1224.